The following is a 150-amino-acid chain: UPF0756 membrane protein A1S_2121 (150 aa).

The next 4 helical transmembrane spans lie at Ser-22 to Leu-42, Phe-45 to Val-65, Phe-83 to Gly-103, and Val-115 to Val-135.

This sequence belongs to the UPF0756 family.

It localises to the cell membrane. This is UPF0756 membrane protein A1S_2121 from Acinetobacter baumannii (strain ATCC 17978 / DSM 105126 / CIP 53.77 / LMG 1025 / NCDC KC755 / 5377).